Here is a 177-residue protein sequence, read N- to C-terminus: UPF0114 protein HPAG1_0183 (177 aa).

The next 4 helical transmembrane spans lie at 15-35 (WLLA…GYVF), 54-74 (LVLS…VLMV), 102-122 (FNAL…IFLL), and 145-165 (PIFW…LAAV).

It belongs to the UPF0114 family.

It localises to the cell membrane. The protein is UPF0114 protein HPAG1_0183 of Helicobacter pylori (strain HPAG1).